A 446-amino-acid chain; its full sequence is NADH oxidase (446 aa).

Residues 7 to 11 (GCTHA), Glu-32, Cys-42, Val-79, 110 to 113 (TTGS), Lys-132, and Tyr-157 each bind FAD. Catalysis depends on His-10, which acts as the Proton acceptor. The Redox-active role is filled by Cys-42. A Cysteine sulfinic acid (-SO2H) modification is found at Cys-42. Residues 150–165 (VVVVGGGYIGIELVEA), Asp-177, Tyr-186, and Gly-243 each bind NAD(+). FAD contacts are provided by residues 271–281 (TSNPDIFAAGD), Leu-298, Ala-299, and Thr-300. Residue Gly-328 participates in NAD(+) binding. Phe-424 serves as a coordination point for FAD.

It belongs to the class-III pyridine nucleotide-disulfide oxidoreductase family. As to quaternary structure, homodimer. FAD serves as cofactor. Post-translationally, the N-terminus is blocked.

The enzyme catalyses 2 NADH + O2 + 2 H(+) = 2 NAD(+) + 2 H2O. Functionally, catalyzes the four-electron reduction of molecular oxygen to water. The sequence is that of NADH oxidase (nox) from Enterococcus faecalis (strain ATCC 700802 / V583).